A 407-amino-acid polypeptide reads, in one-letter code: Putative polysaccharide ligase RF_0568 (407 aa).

Helical transmembrane passes span 15-35 (LGMV…LMLF), 71-91 (MTIK…LFAI), 100-120 (FIQV…VPFG), 129-149 (LILG…SHGF), 166-186 (GCAL…SSGK), 203-223 (ISDS…FILA), 229-249 (IFFK…PVIA), 272-292 (LFIW…GYGF), 324-344 (ILQI…CLVY), and 379-399 (IWQI…KLLV).

It belongs to the O-antigen ligase family.

The protein localises to the membrane. The protein is Putative polysaccharide ligase RF_0568 of Rickettsia felis (strain ATCC VR-1525 / URRWXCal2) (Rickettsia azadi).